The sequence spans 184 residues: Photosystem I assembly protein Ycf4 (184 aa).

The next 2 helical transmembrane spans lie at 22 to 42 (FCWA…GTSS) and 57 to 77 (IVFF…LFIS).

The protein belongs to the Ycf4 family.

It is found in the plastid. It localises to the chloroplast thylakoid membrane. In terms of biological role, seems to be required for the assembly of the photosystem I complex. In Gossypium barbadense (Sea Island cotton), this protein is Photosystem I assembly protein Ycf4.